The sequence spans 140 residues: ATP synthase epsilon chain (140 aa).

The protein belongs to the ATPase epsilon chain family. F-type ATPases have 2 components, CF(1) - the catalytic core - and CF(0) - the membrane proton channel. CF(1) has five subunits: alpha(3), beta(3), gamma(1), delta(1), epsilon(1). CF(0) has three main subunits: a, b and c.

It is found in the cell inner membrane. In terms of biological role, produces ATP from ADP in the presence of a proton gradient across the membrane. The protein is ATP synthase epsilon chain of Nitrosomonas eutropha (strain DSM 101675 / C91 / Nm57).